Here is a 505-residue protein sequence, read N- to C-terminus: Probable alpha-L-arabinofuranosidase C (505 aa).

3 N-linked (GlcNAc...) asparagine glycosylation sites follow: asparagine 152, asparagine 269, and asparagine 438.

It belongs to the glycosyl hydrolase 51 family.

Its subcellular location is the secreted. The catalysed reaction is Hydrolysis of terminal non-reducing alpha-L-arabinofuranoside residues in alpha-L-arabinosides.. It participates in glycan metabolism; L-arabinan degradation. In terms of biological role, alpha-L-arabinofuranosidase involved in the degradation of arabinoxylan, a major component of plant hemicellulose. Acts only on small linear 1,5-alpha-linked L-arabinofuranosyl oligosaccharides. The sequence is that of Probable alpha-L-arabinofuranosidase C (abfC) from Aspergillus clavatus (strain ATCC 1007 / CBS 513.65 / DSM 816 / NCTC 3887 / NRRL 1 / QM 1276 / 107).